Here is a 91-residue protein sequence, read N- to C-terminus: Probable Fe(2+)-trafficking protein (91 aa).

It belongs to the Fe(2+)-trafficking protein family.

In terms of biological role, could be a mediator in iron transactions between iron acquisition and iron-requiring processes, such as synthesis and/or repair of Fe-S clusters in biosynthetic enzymes. This chain is Probable Fe(2+)-trafficking protein, found in Histophilus somni (strain 129Pt) (Haemophilus somnus).